A 344-amino-acid chain; its full sequence is Methionine import ATP-binding protein MetN (344 aa).

An ABC transporter domain is found at 2 to 241; sequence IEINQVNKVF…PKTELAHDFI (240 aa). 38–45 is an ATP binding site; that stretch reads GSSGAGKS.

It belongs to the ABC transporter superfamily. Methionine importer (TC 3.A.1.24) family. The complex is composed of two ATP-binding proteins (MetN), two transmembrane proteins (MetI) and a solute-binding protein (MetQ).

The protein localises to the cell inner membrane. The catalysed reaction is L-methionine(out) + ATP + H2O = L-methionine(in) + ADP + phosphate + H(+). The enzyme catalyses D-methionine(out) + ATP + H2O = D-methionine(in) + ADP + phosphate + H(+). In terms of biological role, part of the ABC transporter complex MetNIQ involved in methionine import. Responsible for energy coupling to the transport system. The protein is Methionine import ATP-binding protein MetN of Vibrio vulnificus (strain CMCP6).